The chain runs to 850 residues: RPA-related protein RADX (850 aa).

Residues 1–31 form a disordered region; that stretch reads MSGESGQPQPGPSHAGLYLEHPERDQAGVPG. The OB DNA-binding region spans 228 to 331; that stretch reads WNSRKNFPAL…LISTMEICLN (104 aa). 2 disordered regions span residues 575 to 612 and 632 to 671; these read EAFW…MGSQ and GPSA…GKSR. Basic and acidic residues predominate over residues 590–608; it reads GKEDHCHERGSKRSQDDRP. Polar residues predominate over residues 643–668; that stretch reads PHSSAQMKGSKHNTPSQESSTAYTTG.

It is found in the chromosome. In terms of biological role, single-stranded DNA-binding protein recruited to replication forks to maintain genome stability. Prevents fork collapse by antagonizing the accumulation of RAD51 at forks to ensure the proper balance of fork remodeling and protection without interfering with the capacity of cells to complete homologous recombination of double-strand breaks. The sequence is that of RPA-related protein RADX from Mus musculus (Mouse).